The chain runs to 198 residues: Rac-like GTP-binding protein ARAC3 (198 aa).

GTP-binding positions include 13 to 21 (GDGAVGKTC), 31 to 38 (FPTDYVPT), 60 to 64 (DTAGQ), and 118 to 121 (TKLD). An Effector region motif is present at residues 35–43 (YVPTVFDNF). A lipid anchor (S-palmitoyl cysteine) is attached at cysteine 158. Cysteine 195 carries the cysteine methyl ester modification. Cysteine 195 carries the S-geranylgeranyl cysteine lipid modification. Residues 196-198 (SIL) constitute a propeptide, removed in mature form.

Belongs to the small GTPase superfamily. Rho family. Interacts with Rho GDP-dissociation inhibitor 1 and ICR1. Binds to SPK1 when in the inactive GDP-bound form. Ubiquitous. Preferentially expressed at the tip of root hairs.

Its subcellular location is the cytoplasm. The protein resides in the cell membrane. Its function is as follows. Inactive GDP-bound Rho GTPases reside in the cytosol, are found in a complex with Rho GDP-dissociation inhibitors (Rho GDIs), and are released from the GDI protein in order to translocate to membranes upon activation. Involved in cell polarity control during the actin-dependent tip growth of root hairs, thus regulating root hair length and root hair initiation. Contributes, in a SPK1-dependent manner, to the prevention of cortical microtubules organization into parallel arrays oriented perpendicular to the axis of cell elongation to limit anisotropic cell growth during petal development. SPK1-dependent activation is required for auxin-mediated inhibition of PIN2 internalization during gravitropic responses. This Arabidopsis thaliana (Mouse-ear cress) protein is Rac-like GTP-binding protein ARAC3.